A 293-amino-acid chain; its full sequence is MNAIANLAATPRADLGECLADLAVDALIDEAELSPKPALVDRRGNGAHADLHLGLMQASALSLWPCFKEMADAAQRHARIDARLRGVLGQLGREGEVAMLRTTEGVNSHRGAIWALGLLVAAAALAPRRTQAGEVAARAGRIALLDDPAAASGDSHGERVRRRYGVGGAREEARLGFPRAVRHGLPQLWRSRESGAGEQNARLDALLAIMSVLDDTCVLHRAGRVGLAAMQEGARAVLAAGGSASLAGRRRLRELDRRLLALNASPGGAADLLAACLFLDRLPAALGGWAGSL.

The protein belongs to the CitG/MdcB family.

It catalyses the reaction 3'-dephospho-CoA + ATP = 2'-(5''-triphospho-alpha-D-ribosyl)-3'-dephospho-CoA + adenine. Involved in the formation of 2-(5''-phosphoribosyl)-3'-dephosphocoenzyme-A, the prosthetic group of the acyl-carrier protein of the malonate decarboxylase. This is Probable 2-(5''-triphosphoribosyl)-3'-dephosphocoenzyme-A synthase from Pseudomonas paraeruginosa (strain DSM 24068 / PA7) (Pseudomonas aeruginosa (strain PA7)).